The following is a 445-amino-acid chain: MVLEGNPDVGSPRTSDLQHPGSQGSCILSCPGEEALAGEEPIKYGELIVLGYNGCLASGDKGRRRSRLALSRRPHANGVKPDVMHHISTPLVSKALSNRGQHSISFTLSRSHSVIVEYTHDSDKDMFQIGRSTENMIDFVVTDTSPGGGATEGPSAQSTISRYACRILCDRRPPYTARIYAAGFDASSNIFLGERAAKWRTPDGLMDGLTTNGVLVMHPAGGFSEDSAPGVWREISVCGNVYTLRDSRSAQQRGKLVENESNVLQDGSLIDLCGATLLWRTPAGLLRAPTLKQLEAQRQEANAARPQCPVGLSTLAFPSPARGRTAPDKQQPWVYVRCGHVHGYHGWGCRRERGPQERECPLCRLVGPYVPLWLGQEAGLCLDPGPPSHAFAPCGHVCSEKTARYWAQTPLPHGTHAFHAACPFCGAWLTGELGCVRLIFQGPLD.

The tract at residues 1–24 (MVLEGNPDVGSPRTSDLQHPGSQG) is disordered. Phosphoserine is present on serine 11. Positions 12–24 (PRTSDLQHPGSQG) are enriched in polar residues.

Belongs to the pellino family. Interacts with TRAF6, MAP3K14 and MAP3K7. Post-translationally, phosphorylated by IRAK1 enhancing its E3 ligase activity.

It catalyses the reaction S-ubiquitinyl-[E2 ubiquitin-conjugating enzyme]-L-cysteine + [acceptor protein]-L-lysine = [E2 ubiquitin-conjugating enzyme]-L-cysteine + N(6)-ubiquitinyl-[acceptor protein]-L-lysine.. It functions in the pathway protein modification; protein ubiquitination. Functionally, E3 ubiquitin ligase catalyzing the covalent attachment of ubiquitin moieties onto substrate proteins. Involved in the TLR and IL-1 signaling pathways via interaction with the complex containing IRAK kinases and TRAF6. Mediates 'Lys-63'-linked polyubiquitination of IRAK1. Can activate AP1/JUN and ELK1. Acts as a regulator of innate immunity by mediating 'Lys-63'-linked polyubiquitination of RIPK2 downstream of NOD1 and NOD2, thereby transforming RIPK2 into a scaffolding protein for downstream effectors, ultimately leading to activation of the NF-kappa-B and MAP kinases signaling. Catalyzes 'Lys-63'-linked polyubiquitination of RIPK2 in parallel of XIAP. In Mus musculus (Mouse), this protein is E3 ubiquitin-protein ligase pellino homolog 3.